The following is a 479-amino-acid chain: Cardiolipin synthase A (479 aa).

2 consecutive transmembrane segments (helical) span residues 8–28 (FFGY…IHAL) and 38–58 (IAWA…YLVF). PLD phosphodiesterase domains lie at 218-245 (INFR…GDEY) and 392-419 (EPGF…DNRS). Catalysis depends on residues His223, Lys225, Asp230, His397, Lys399, and Asp404.

It belongs to the phospholipase D family. Cardiolipin synthase subfamily. ClsA sub-subfamily.

The protein resides in the cell inner membrane. The catalysed reaction is 2 a 1,2-diacyl-sn-glycero-3-phospho-(1'-sn-glycerol) = a cardiolipin + glycerol. Functionally, catalyzes the reversible phosphatidyl group transfer from one phosphatidylglycerol molecule to another to form cardiolipin (CL) (diphosphatidylglycerol) and glycerol. The protein is Cardiolipin synthase A of Pseudomonas syringae pv. syringae (strain B728a).